The primary structure comprises 299 residues: MLYLIGLGLSYESDITVRGLETVKKCKRVYLEAYTSILMAANQESLEKFYGREIILADRELVETGSDDILKDADKEDVAFLVVGDPFGATTHTDLVIRARELGIKVETIHNASVMNAVGACGLQLYQFGQTVSLVFFTDSWKPDSFYGKIMENRKIGLHTLLLLDIKVKEQSIENMARGRLIYEPPRYMDIATAAQQLLEIESIRQEQAYTPNTPCVAISRLGSPTQTFKAGTLQELSEYDSGEPLHSLVMLGRQVHELELEYLYQFVDDKEKFKKFVEQDQEFFKPAPYVPPEDVDSE.

S-adenosyl-L-methionine contacts are provided by residues L9, D85, G88, 113 to 114 (SV), L164, L222, and H247.

Belongs to the diphthine synthase family.

It is found in the cytoplasm. The enzyme catalyses 2-[(3S)-amino-3-carboxypropyl]-L-histidyl-[translation elongation factor 2] + 4 S-adenosyl-L-methionine = diphthine methyl ester-[translation elongation factor 2] + 4 S-adenosyl-L-homocysteine + 3 H(+). Its pathway is protein modification; peptidyl-diphthamide biosynthesis. Its function is as follows. S-adenosyl-L-methionine-dependent methyltransferase that catalyzes four methylations of the modified target histidine residue in translation elongation factor 2 (EF-2), to form an intermediate called diphthine methyl ester. The four successive methylation reactions represent the second step of diphthamide biosynthesis. This chain is Diphthine methyl ester synthase 1 (DPH5), found in Candida albicans (strain SC5314 / ATCC MYA-2876) (Yeast).